The chain runs to 127 residues: MARKMIRVLLVEDEEINRVVARAALKAAGGGDVVDEAENGEVAVQRVRDAAAPYDLVLMDKQMPVMDGHEATRRIRGMGVTTPIVAVSSDGLPADVDAFITAGADDFTSKPLSKEKLGVILAKFRLA.

Residues 7-125 form the Response regulatory domain; sequence RVLLVEDEEI…KLGVILAKFR (119 aa). 4-aspartylphosphate is present on aspartate 60.

The protein belongs to the ARR family. Type-C subfamily. Post-translationally, two-component system major event consists of a His-to-Asp phosphorelay between a sensor histidine kinase (HK) and a response regulator (RR). In plants, the His-to-Asp phosphorelay involves an additional intermediate named Histidine-containing phosphotransfer protein (HPt). This multistep phosphorelay consists of a His-Asp-His-Asp sequential transfer of a phosphate group between first a His and an Asp of the HK protein, followed by the transfer to a conserved His of the HPt protein and finally the transfer to an Asp in the receiver domain of the RR protein.

Its function is as follows. Functions as a response regulator involved in His-to-Asp phosphorelay signal transduction system. Phosphorylation of the Asp residue in the receiver domain activates the ability of the protein to promote the transcription of target genes. May directly activate some type-A response regulators in response to cytokinins. The protein is Two-component response regulator ORR41 of Oryza sativa subsp. japonica (Rice).